The sequence spans 305 residues: Serine/threonine-protein phosphatase PP-X homolog 3 (305 aa).

The Mn(2+) site is built by Asp53, His55, Asp81, and Asn113. His114 (proton donor) is an active-site residue. His163 and His237 together coordinate Mn(2+).

This sequence belongs to the PPP phosphatase family. PP-4 (PP-X) subfamily. Mn(2+) serves as cofactor.

The catalysed reaction is O-phospho-L-seryl-[protein] + H2O = L-seryl-[protein] + phosphate. It catalyses the reaction O-phospho-L-threonyl-[protein] + H2O = L-threonyl-[protein] + phosphate. The sequence is that of Serine/threonine-protein phosphatase PP-X homolog 3 (Ppx3) from Paramecium tetraurelia.